Consider the following 530-residue polypeptide: Chaperone Ric-8A (530 aa).

A Phosphoserine modification is found at Ser435. Residues Thr440 and Thr442 each carry the phosphothreonine modification. Residues Ser501, Ser522, Ser523, and Ser527 each carry the phosphoserine modification.

Belongs to the synembryn family. In terms of assembly, interacts with GDP-bound G alpha proteins GNAI1, GNAO1 and GNAQ, and with GNA13 with lower affinity. Does not interact with G-alpha proteins when they are in complex with subunits beta and gamma. Interacts (via C-terminus) with RGS14; the interaction stimulates the dissociation of the complex between RGS14 and the active GTP-bound form of GNAI1. Interacts with NCS1; interaction is favored in the absence of Ca(2+) and myristoylation of NCS1 is not required. Phosphorylated at Ser-435 and Thr-440 by CK2, stabilizing its interface with G alpha proteins.

The protein localises to the cytoplasm. Its subcellular location is the cell cortex. In terms of biological role, chaperone that specifically binds and folds nascent G alpha proteins prior to G protein heterotrimer formation, promoting their stability and activity: folds GNAI1, GNAO1, GNA13 and GNAQ. Does not fold G(s) G-alpha proteins GNAS nor GNAL. Also acts as a guanine nucleotide exchange factor (GEF) for G alpha proteins by stimulating exchange of bound GDP for free GTP. Involved in regulation of microtubule pulling forces during mitotic movement of chromosomes by stimulating G(i)-alpha protein (GNAI1), possibly leading to release G(i)-alpha-GTP and NuMA proteins from the NuMA-GPSM2-G(i)-alpha-GDP complex. Also acts as an activator for G(q)-alpha (GNAQ) protein by enhancing the G(q)-coupled receptor-mediated ERK activation. This Pongo abelii (Sumatran orangutan) protein is Chaperone Ric-8A (RIC8A).